Here is a 142-residue protein sequence, read N- to C-terminus: MLRTMLKSKIHRATVTQAYLHYVGSVTIDADLMGAADLLEGEQVTIVDINNGARLVTYAIAGERGTGVIGINGAAAHLVHPGDLVILISYGTMEDAEAHAYQPRIVFVDADNKPIDLGHDPGSVPLDISVAAELFDPRIGAR.

Serine 25 functions as the Schiff-base intermediate with substrate; via pyruvic acid in the catalytic mechanism. A Pyruvic acid (Ser) modification is found at serine 25. Residue threonine 57 coordinates substrate. The active-site Proton donor is the tyrosine 58. 73-75 (GAA) contributes to the substrate binding site.

The protein belongs to the PanD family. In terms of assembly, heterooctamer of four alpha and four beta subunits. Requires pyruvate as cofactor. In terms of processing, is synthesized initially as an inactive proenzyme, which is activated by self-cleavage at a specific serine bond to produce a beta-subunit with a hydroxyl group at its C-terminus and an alpha-subunit with a pyruvoyl group at its N-terminus.

It is found in the cytoplasm. It carries out the reaction L-aspartate + H(+) = beta-alanine + CO2. Its pathway is cofactor biosynthesis; (R)-pantothenate biosynthesis; beta-alanine from L-aspartate: step 1/1. In terms of biological role, catalyzes the pyruvoyl-dependent decarboxylation of aspartate to produce beta-alanine. The protein is Aspartate 1-decarboxylase of Mycobacterium leprae (strain Br4923).